We begin with the raw amino-acid sequence, 428 residues long: Adenylosuccinate synthetase (428 aa).

GTP-binding positions include 12–18 (GDEGKGK) and 40–42 (GHT). The Proton acceptor role is filled by aspartate 13. 2 residues coordinate Mg(2+): aspartate 13 and glycine 40. IMP is bound by residues 13–16 (DEGK), 38–41 (NAGH), threonine 128, arginine 142, glutamine 223, threonine 238, and arginine 302. Histidine 41 functions as the Proton donor in the catalytic mechanism. Residue 298–304 (TTTGRPR) participates in substrate binding. GTP contacts are provided by residues arginine 304, 330–332 (KLD), and 412–414 (SVG).

The protein belongs to the adenylosuccinate synthetase family. In terms of assembly, homodimer. Mg(2+) serves as cofactor.

It is found in the cytoplasm. It carries out the reaction IMP + L-aspartate + GTP = N(6)-(1,2-dicarboxyethyl)-AMP + GDP + phosphate + 2 H(+). The protein operates within purine metabolism; AMP biosynthesis via de novo pathway; AMP from IMP: step 1/2. Its function is as follows. Plays an important role in the de novo pathway of purine nucleotide biosynthesis. Catalyzes the first committed step in the biosynthesis of AMP from IMP. The polypeptide is Adenylosuccinate synthetase (Brevibacillus brevis (strain 47 / JCM 6285 / NBRC 100599)).